The primary structure comprises 546 residues: Chaperonin GroEL (546 aa).

Residues threonine 30–proline 33, lysine 51, aspartate 87–threonine 91, glycine 415, and aspartate 496 each bind ATP. The disordered stretch occupies residues proline 526–methionine 546. A compositionally biased stretch (gly residues) spans alanine 532–methionine 546.

This sequence belongs to the chaperonin (HSP60) family. As to quaternary structure, forms a cylinder of 14 subunits composed of two heptameric rings stacked back-to-back. Interacts with the co-chaperonin GroES.

Its subcellular location is the cytoplasm. The enzyme catalyses ATP + H2O + a folded polypeptide = ADP + phosphate + an unfolded polypeptide.. In terms of biological role, together with its co-chaperonin GroES, plays an essential role in assisting protein folding. The GroEL-GroES system forms a nano-cage that allows encapsulation of the non-native substrate proteins and provides a physical environment optimized to promote and accelerate protein folding. This is Chaperonin GroEL from Ruegeria pomeroyi (strain ATCC 700808 / DSM 15171 / DSS-3) (Silicibacter pomeroyi).